The chain runs to 197 residues: 7-methyl-GTP pyrophosphatase (197 aa).

Asp79 (proton acceptor) is an active-site residue.

Belongs to the Maf family. YceF subfamily.

It localises to the cytoplasm. The enzyme catalyses N(7)-methyl-GTP + H2O = N(7)-methyl-GMP + diphosphate + H(+). Functionally, nucleoside triphosphate pyrophosphatase that hydrolyzes 7-methyl-GTP (m(7)GTP). May have a dual role in cell division arrest and in preventing the incorporation of modified nucleotides into cellular nucleic acids. The sequence is that of 7-methyl-GTP pyrophosphatase from Dictyostelium discoideum (Social amoeba).